A 130-amino-acid polypeptide reads, in one-letter code: MGIVGVGIDLVSIPDFAEQVDQPGTAFAATFTPGERRDASDKSSSAARHLAARWAAKEAVIKAWSGSRFAQRPVLPEDIHRDIEVVTDMWGRPRVRLTGEIAKHLADVTIHVSLTHEGDTAAAVAILETS.

Residues D9 and E58 each coordinate Mg(2+).

This sequence belongs to the P-Pant transferase superfamily. AcpS family. It depends on Mg(2+) as a cofactor.

It is found in the cytoplasm. It carries out the reaction apo-[ACP] + CoA = holo-[ACP] + adenosine 3',5'-bisphosphate + H(+). Transfers the 4'-phosphopantetheine moiety from coenzyme A to a Ser of acyl-carrier-protein. In Mycobacterium marinum (strain ATCC BAA-535 / M), this protein is Holo-[acyl-carrier-protein] synthase.